The primary structure comprises 233 residues: Cytidylate kinase (233 aa).

Residue 15–23 participates in ATP binding; sequence GPSGAGKST. A compositionally biased stretch (basic and acidic residues) spans 183–201; that stretch reads RRDEQDSGREHAPLRRADD. Positions 183–202 are disordered; the sequence is RRDEQDSGREHAPLRRADDA.

The protein belongs to the cytidylate kinase family. Type 1 subfamily.

Its subcellular location is the cytoplasm. It catalyses the reaction CMP + ATP = CDP + ADP. It carries out the reaction dCMP + ATP = dCDP + ADP. The protein is Cytidylate kinase of Geobacter sulfurreducens (strain ATCC 51573 / DSM 12127 / PCA).